The chain runs to 45 residues: Pyruvate dehydrogenase E1 component (45 aa).

As to quaternary structure, homodimer. Thiamine diphosphate is required as a cofactor.

It carries out the reaction N(6)-[(R)-lipoyl]-L-lysyl-[protein] + pyruvate + H(+) = N(6)-[(R)-S(8)-acetyldihydrolipoyl]-L-lysyl-[protein] + CO2. Functionally, the pyruvate dehydrogenase complex catalyzes the overall conversion of pyruvate to acetyl-CoA and CO(2). It contains multiple copies of three enzymatic components: pyruvate dehydrogenase (E1), dihydrolipoamide acetyltransferase (E2) and lipoamide dehydrogenase (E3). In Azotobacter vinelandii, this protein is Pyruvate dehydrogenase E1 component.